The chain runs to 337 residues: Cholinesterase 2 (337 aa).

Residue S99 is the Acyl-ester intermediate of the active site. An intrachain disulfide couples C153 to C165. E224 serves as the catalytic Charge relay system. The N-linked (GlcNAc...) asparagine glycan is linked to N290.

Belongs to the type-B carboxylesterase/lipase family.

The enzyme catalyses an acylcholine + H2O = a carboxylate + choline + H(+). This Branchiostoma lanceolatum (Common lancelet) protein is Cholinesterase 2 (CHE2).